Here is a 339-residue protein sequence, read N- to C-terminus: Lipoate--protein ligase (339 aa).

A BPL/LPL catalytic domain is found at 31-221 (FLDDDILFPY…QLLQIETISQ (191 aa)). Residues Arg73, 78–81 (GAVY), Lys135, and Ala139 each bind ATP. Lys135 is a (R)-lipoate binding site.

Belongs to the LplA family.

The catalysed reaction is L-lysyl-[lipoyl-carrier protein] + (R)-lipoate + ATP = N(6)-[(R)-lipoyl]-L-lysyl-[lipoyl-carrier protein] + AMP + diphosphate + H(+). It participates in protein modification; protein lipoylation via exogenous pathway; protein N(6)-(lipoyl)lysine from lipoate: step 1/2. Its pathway is protein modification; protein lipoylation via exogenous pathway; protein N(6)-(lipoyl)lysine from lipoate: step 2/2. Catalyzes specifically the lipoylation of GcvH-L (SpyM50867), likely via the ATP-dependent activation of lipoate to lipoyl-AMP and the transfer of the activated lipoyl onto the lipoyl domain of the target protein. The sequence is that of Lipoate--protein ligase from Streptococcus pyogenes serotype M5 (strain Manfredo).